The primary structure comprises 156 residues: Ribosome maturation factor RimP (156 aa).

It belongs to the RimP family.

It localises to the cytoplasm. Its function is as follows. Required for maturation of 30S ribosomal subunits. The polypeptide is Ribosome maturation factor RimP (Bacillus mycoides (strain KBAB4) (Bacillus weihenstephanensis)).